The chain runs to 553 residues: Nucleoside-diphosphatase mig-23 (553 aa).

Topologically, residues 1 to 8 (MRVSRRFT) are cytoplasmic. The helical transmembrane segment at 9-29 (ILAITAMIFLSLIICIYAVAA) threads the bilayer. At 30–489 (HTTVNVILQK…IVKETHSASE (460 aa)) the chain is on the lumenal side. Glu-174 (proton acceptor) is an active-site residue. N-linked (GlcNAc...) asparagine glycosylation is found at Asn-190 and Asn-284. Residues 490-510 (SLWAPLFFLSAVFCLFVLVCA) form a helical membrane-spanning segment. The Cytoplasmic portion of the chain corresponds to 511-553 (KEHSLLCFDDKRRASFGLTRRQYSYKMLKEDRTSSSAFLENFA).

This sequence belongs to the GDA1/CD39 NTPase family.

The protein localises to the golgi apparatus membrane. It carries out the reaction a ribonucleoside 5'-diphosphate + H2O = a ribonucleoside 5'-phosphate + phosphate + H(+). Seems to be able to hydrolyze ADP, UDP and GDP. Supports mig-17 glycosylation and surface expression, which is required for proper migration of distal tip cells during gonad morphogenesis. This is Nucleoside-diphosphatase mig-23 from Caenorhabditis briggsae.